A 145-amino-acid chain; its full sequence is 3-hydroxyacyl-[acyl-carrier-protein] dehydratase FabZ (145 aa).

The active site involves His51.

The protein belongs to the thioester dehydratase family. FabZ subfamily.

It is found in the cytoplasm. The catalysed reaction is a (3R)-hydroxyacyl-[ACP] = a (2E)-enoyl-[ACP] + H2O. Functionally, involved in unsaturated fatty acids biosynthesis. Catalyzes the dehydration of short chain beta-hydroxyacyl-ACPs and long chain saturated and unsaturated beta-hydroxyacyl-ACPs. The sequence is that of 3-hydroxyacyl-[acyl-carrier-protein] dehydratase FabZ from Staphylococcus epidermidis (strain ATCC 35984 / DSM 28319 / BCRC 17069 / CCUG 31568 / BM 3577 / RP62A).